Here is a 1426-residue protein sequence, read N- to C-terminus: ABC transporter G family member 31 (1426 aa).

The region spanning 142 to 415 is the ABC transporter 1 domain; it reads LRHLRIYRGG…FAGMGFRCPE (274 aa). 175–182 contributes to the ATP binding site; sequence GPPSSGKT. Residues 493–706 form the ABC transmembrane type-2 1 domain; it reads ELLKSNFQWQ…AQNAISVNEF (214 aa). The next 7 helical transmembrane spans lie at 511–531, 544–564, 592–612, 630–650, 655–675, 681–701, and 741–761; these read FIYV…MTVF, GIIY…NGFT, LPSW…WVLV, FLLL…MASL, IVAN…GGFI, IPAW…QNAI, and IGVG…TLFL. Residues 824–1076 enclose the ABC transporter 2 domain; sequence MCFKNINYYV…NLVEFFEAIP (253 aa). 869–876 contributes to the ATP binding site; that stretch reads GVSGAGKT. In terms of domain architecture, ABC transmembrane type-2 2 spans 1149-1363; the sequence is AQYAACLWKQ…TLYGLLTSQF (215 aa). The next 7 membrane-spanning stretches (helical) occupy residues 1168–1188, 1200–1220, 1245–1265, 1283–1303, 1313–1333, 1341–1363, and 1398–1418; these read YTAV…TICW, IFNA…TNAT, LPFA…QSLI, FLWY…YGMM, VAPI…GFMI, WWRW…TSQF, and VVAG…ALAI.

Belongs to the ABC transporter superfamily. ABCG family. PDR (TC 3.A.1.205) subfamily.

The protein localises to the membrane. Its function is as follows. May be a general defense protein. The protein is ABC transporter G family member 31 of Oryza sativa subsp. japonica (Rice).